The chain runs to 208 residues: Thymidylate kinase (208 aa).

7 to 14 contacts ATP; the sequence is GIDGAGKT.

It belongs to the thymidylate kinase family.

It carries out the reaction dTMP + ATP = dTDP + ADP. Phosphorylation of dTMP to form dTDP in both de novo and salvage pathways of dTTP synthesis. The chain is Thymidylate kinase (tmk) from Xylella fastidiosa (strain 9a5c).